A 434-amino-acid polypeptide reads, in one-letter code: MSKILKIIGREIIDSRGNPTIECEVLLEGGFVGLASVPSGASTGSFETWELRDQDKNRFMGKGVQKAVEIINNKIFYSLKNKNAIDQFDIDQTMINLDGTENKSNLGSNSILSVSLATAKAAASSKGMPLYQHIAEINNTPGVFSMPLPMINIINGGKHANNNIDIQEFMIQPISAKSITEAIRIGAEIFHSLGNLLKDKGMSTTVGDEGGYAPNFKSNEEALNVIQDAVHKTKYKLGKDITLAIDCAASELYNKTRKKYQFIGEGTEFSSQELTHYLKKLSNKYPIISIEDGQDESDWEGFLYQTKELGNSLQLVGDDLFVTNKNILKKGIKKGVANAILIKLNQIGTLTETIETIKIAKKFNYGVIISHRSGETEDTSIADLSVGTASGQIKTGSMSRSDRTSKYNQLIRIEEILNKKRAPFYGLKEVKSSF.

Q167 is a binding site for (2R)-2-phosphoglycerate. Residue E209 is the Proton donor of the active site. The Mg(2+) site is built by D246, E291, and D318. Residues K343, R372, S373, and K394 each contribute to the (2R)-2-phosphoglycerate site. The active-site Proton acceptor is K343.

The protein belongs to the enolase family. In terms of assembly, component of the RNA degradosome, a multiprotein complex involved in RNA processing and mRNA degradation. Mg(2+) is required as a cofactor.

The protein localises to the cytoplasm. Its subcellular location is the secreted. It localises to the cell surface. The catalysed reaction is (2R)-2-phosphoglycerate = phosphoenolpyruvate + H2O. It participates in carbohydrate degradation; glycolysis; pyruvate from D-glyceraldehyde 3-phosphate: step 4/5. Its function is as follows. Catalyzes the reversible conversion of 2-phosphoglycerate (2-PG) into phosphoenolpyruvate (PEP). It is essential for the degradation of carbohydrates via glycolysis. The protein is Enolase of Buchnera aphidicola subsp. Schizaphis graminum (strain Sg).